We begin with the raw amino-acid sequence, 457 residues long: PDZ and LIM domain protein 7 (457 aa).

The region spanning 1 to 85 (MDSFKVVLEG…RLSLGLSRAQ (85 aa)) is the PDZ domain. Serine 78 is modified (phosphoserine). Disordered regions lie at residues 82–142 (SRAQ…LVPD), 176–226 (TEFM…PWAV), and 239–258 (TSTVLTRHSQPATPTPLQSR). Arginine 103 is subject to Asymmetric dimethylarginine. A Phosphoserine modification is found at serine 111. Positions 208–221 (EPWPGPTAPSPTSR) are enriched in pro residues. The residue at position 247 (serine 247) is a Phosphoserine. LIM zinc-binding domains follow at residues 280 to 338 (PVCH…VRYA), 339 to 398 (PSCA…MFGT), and 399 to 457 (KCHG…FSHV).

In terms of assembly, binds via its LIM zinc-binding 3 domain (LIM 3) to endocytic codes of INSR, but not with those of IGF1R, LDLR, TFRC, or EGFR. Interacts with various PKC isoforms through the LIM zinc-binding domains. Binds to RET in a phosphorylation-independent manner via its LIM zinc-binding domain 2 (LIM 2). Probably part of a complex with SHC and the RET dimer. Interacts with TPM2. Interacts with TBX4 and TBX5. As to expression, isoform 1 and isoform 2 are expressed ubiquitously, however, isoform 2 predominates in skeletal muscle, isoform 1 is more abundant in lung, spleen, leukocytes and fetal liver.

The protein localises to the cytoplasm. It is found in the cytoskeleton. Functionally, may function as a scaffold on which the coordinated assembly of proteins can occur. May play a role as an adapter that, via its PDZ domain, localizes LIM-binding proteins to actin filaments of both skeletal muscle and nonmuscle tissues. Involved in both of the two fundamental mechanisms of bone formation, direct bone formation (e.g. embryonic flat bones mandible and cranium), and endochondral bone formation (e.g. embryonic long bone development). Plays a role during fracture repair. Involved in BMP6 signaling pathway. This chain is PDZ and LIM domain protein 7 (PDLIM7), found in Homo sapiens (Human).